Consider the following 359-residue polypeptide: Phospho-N-acetylmuramoyl-pentapeptide-transferase (359 aa).

10 consecutive transmembrane segments (helical) span residues 3–23 (QILI…PVLI), 55–75 (VAIL…GLAF), 80–100 (IGAS…VGFI), 117–137 (TAKT…VLQF), 156–176 (IATV…IVSA), 187–207 (LDGL…LITF), 231–251 (LALI…WNAA), 255–275 (IFMG…LSVT), 280–300 (ILAV…VLQI), and 334–354 (FWLL…GEWL).

This sequence belongs to the glycosyltransferase 4 family. MraY subfamily. Mg(2+) serves as cofactor.

It is found in the cell membrane. It catalyses the reaction UDP-N-acetyl-alpha-D-muramoyl-L-alanyl-gamma-D-glutamyl-meso-2,6-diaminopimeloyl-D-alanyl-D-alanine + di-trans,octa-cis-undecaprenyl phosphate = di-trans,octa-cis-undecaprenyl diphospho-N-acetyl-alpha-D-muramoyl-L-alanyl-D-glutamyl-meso-2,6-diaminopimeloyl-D-alanyl-D-alanine + UMP. The protein operates within cell wall biogenesis; peptidoglycan biosynthesis. Functionally, catalyzes the initial step of the lipid cycle reactions in the biosynthesis of the cell wall peptidoglycan: transfers peptidoglycan precursor phospho-MurNAc-pentapeptide from UDP-MurNAc-pentapeptide onto the lipid carrier undecaprenyl phosphate, yielding undecaprenyl-pyrophosphoryl-MurNAc-pentapeptide, known as lipid I. In Mycobacterium tuberculosis (strain ATCC 25177 / H37Ra), this protein is Phospho-N-acetylmuramoyl-pentapeptide-transferase.